The sequence spans 216 residues: MYNVIFLGAPGSGKGTQGEVVAKELKLAHMATGDLFRKAIECGDELGDTVKSYMERGELVPDEITISVVLKHLAGLKDVTGIILDGFPRSLRQAEALDEALVQQGQGIGRVIYINVPEDELVRRLSGRWVCRSCQSPYQSGCAEVTKGKCSRCQGELYQRPDDTPETVKERLKVYFSKTAPLIEYYRSKGKLSEIDGMAEISEVTKRIISAIKCGK.

ATP is bound at residue 11 to 16 (GSGKGT). An NMP region spans residues 31-60 (ATGDLFRKAIECGDELGDTVKSYMERGELV). Residues T32, R37, 58–60 (ELV), 86–89 (GFPR), and Q93 each bind AMP. Residues 127 to 163 (GRWVCRSCQSPYQSGCAEVTKGKCSRCQGELYQRPDD) form an LID region. Residue R128 participates in ATP binding. 4 residues coordinate Zn(2+): C131, C134, C150, and C153. The AMP site is built by R160 and R171. A199 provides a ligand contact to ATP.

It belongs to the adenylate kinase family. Monomer.

It localises to the cytoplasm. The catalysed reaction is AMP + ATP = 2 ADP. Its pathway is purine metabolism; AMP biosynthesis via salvage pathway; AMP from ADP: step 1/1. Functionally, catalyzes the reversible transfer of the terminal phosphate group between ATP and AMP. Plays an important role in cellular energy homeostasis and in adenine nucleotide metabolism. In Dehalococcoides mccartyi (strain ATCC BAA-2100 / JCM 16839 / KCTC 5957 / BAV1), this protein is Adenylate kinase.